Here is a 170-residue protein sequence, read N- to C-terminus: F1 capsule antigen (170 aa).

The first 21 residues, 1 to 21 (MKKISSVIAIALFGTIATANA), serve as a signal peptide directing secretion. Residues 100–150 (GNNHQFTTKVIGKDSRDFDISPKVNGENLVGDDVVLATGSQDFFVRSIGSK) form a contains potential antigenic determinants that may stimulate T-cells region.

The protein resides in the secreted. The protein localises to the capsule. The protein is F1 capsule antigen (caf1) of Yersinia pestis.